The primary structure comprises 194 residues: Potassium-transporting ATPase KdpC subunit (194 aa).

Residues 12–34 traverse the membrane as a helical segment; the sequence is LFLLLLTGGVYPLLTTALGQWWF.

This sequence belongs to the KdpC family. In terms of assembly, the system is composed of three essential subunits: KdpA, KdpB and KdpC.

The protein resides in the cell inner membrane. Part of the high-affinity ATP-driven potassium transport (or Kdp) system, which catalyzes the hydrolysis of ATP coupled with the electrogenic transport of potassium into the cytoplasm. This subunit acts as a catalytic chaperone that increases the ATP-binding affinity of the ATP-hydrolyzing subunit KdpB by the formation of a transient KdpB/KdpC/ATP ternary complex. This Salmonella agona (strain SL483) protein is Potassium-transporting ATPase KdpC subunit.